The chain runs to 543 residues: 2-succinyl-5-enolpyruvyl-6-hydroxy-3-cyclohexene-1-carboxylate synthase (543 aa).

The protein belongs to the TPP enzyme family. MenD subfamily. Homodimer. The cofactor is Mg(2+). Mn(2+) serves as cofactor. Requires thiamine diphosphate as cofactor.

The enzyme catalyses isochorismate + 2-oxoglutarate + H(+) = 5-enolpyruvoyl-6-hydroxy-2-succinyl-cyclohex-3-ene-1-carboxylate + CO2. It participates in quinol/quinone metabolism; 1,4-dihydroxy-2-naphthoate biosynthesis; 1,4-dihydroxy-2-naphthoate from chorismate: step 2/7. It functions in the pathway quinol/quinone metabolism; menaquinone biosynthesis. Its function is as follows. Catalyzes the thiamine diphosphate-dependent decarboxylation of 2-oxoglutarate and the subsequent addition of the resulting succinic semialdehyde-thiamine pyrophosphate anion to isochorismate to yield 2-succinyl-5-enolpyruvyl-6-hydroxy-3-cyclohexene-1-carboxylate (SEPHCHC). The sequence is that of 2-succinyl-5-enolpyruvyl-6-hydroxy-3-cyclohexene-1-carboxylate synthase from Corynebacterium glutamicum (strain R).